Consider the following 493-residue polypeptide: Cardiolipin synthase 1 (493 aa).

Helical transmembrane passes span phenylalanine 13–phenylalanine 33 and tryptophan 45–phenylalanine 65. 2 PLD phosphodiesterase domains span residues methionine 228–tyrosine 255 and glutamate 406–serine 433. Catalysis depends on residues histidine 233, lysine 235, aspartate 240, histidine 411, lysine 413, and aspartate 418.

Belongs to the phospholipase D family. Cardiolipin synthase subfamily.

It is found in the cell membrane. It catalyses the reaction 2 a 1,2-diacyl-sn-glycero-3-phospho-(1'-sn-glycerol) = a cardiolipin + glycerol. In terms of biological role, catalyzes the reversible phosphatidyl group transfer from one phosphatidylglycerol molecule to another to form cardiolipin (CL) (diphosphatidylglycerol) and glycerol. This chain is Cardiolipin synthase 1 (cls1), found in Staphylococcus aureus (strain MRSA252).